Consider the following 84-residue polypeptide: Probable cyclin-dependent kinases regulatory subunit (84 aa).

Belongs to the CKS family. In terms of assembly, monomer in solution; may form a homohexamer that can probably bind six kinase subunits.

In terms of biological role, binds to the catalytic subunit of the cyclin dependent kinases and is essential for their biological function. The polypeptide is Probable cyclin-dependent kinases regulatory subunit (Physarum polycephalum (Slime mold)).